The following is a 743-amino-acid chain: NAD(P)H-quinone oxidoreductase subunit 5, chloroplastic (743 aa).

16 helical membrane passes run 9–29 (WIIP…LLLF), 40–60 (WAFQ…NLSI), 89–109 (IDPL…MVLI), 125–145 (FAYM…SNLI), 147–167 (IYIF…FWFT), 185–205 (GDFG…SFEF), 224–244 (VFVT…SAQF), 258–278 (TPIS…FLVA), 284–304 (FIVI…TVFF), 327–347 (LGYM…FHLI), 354–374 (ALLF…VGYC), 396–416 (NSFL…CFWS), 425–445 (WLYS…TAFY), 551–571 (LFPI…GIPF), 607–627 (VFSV…YKPV), and 723–743 (YLFF…FLNL).

This sequence belongs to the complex I subunit 5 family. In terms of assembly, NDH is composed of at least 16 different subunits, 5 of which are encoded in the nucleus.

The protein resides in the plastid. Its subcellular location is the chloroplast thylakoid membrane. It carries out the reaction a plastoquinone + NADH + (n+1) H(+)(in) = a plastoquinol + NAD(+) + n H(+)(out). It catalyses the reaction a plastoquinone + NADPH + (n+1) H(+)(in) = a plastoquinol + NADP(+) + n H(+)(out). In terms of biological role, NDH shuttles electrons from NAD(P)H:plastoquinone, via FMN and iron-sulfur (Fe-S) centers, to quinones in the photosynthetic chain and possibly in a chloroplast respiratory chain. The immediate electron acceptor for the enzyme in this species is believed to be plastoquinone. Couples the redox reaction to proton translocation, and thus conserves the redox energy in a proton gradient. This Helianthus annuus (Common sunflower) protein is NAD(P)H-quinone oxidoreductase subunit 5, chloroplastic (ndhF).